A 371-amino-acid polypeptide reads, in one-letter code: Glutamate 5-kinase (371 aa).

Lys8 contacts ATP. Positions 49, 136, and 149 each coordinate substrate. ATP contacts are provided by residues 169-170 (TD) and 213-219 (TGGMATK). A PUA domain is found at 278-356 (TGKLILDDGA…EDIPQVLGYA (79 aa)).

Belongs to the glutamate 5-kinase family.

It localises to the cytoplasm. The catalysed reaction is L-glutamate + ATP = L-glutamyl 5-phosphate + ADP. Its pathway is amino-acid biosynthesis; L-proline biosynthesis; L-glutamate 5-semialdehyde from L-glutamate: step 1/2. Functionally, catalyzes the transfer of a phosphate group to glutamate to form L-glutamate 5-phosphate. This chain is Glutamate 5-kinase, found in Acaryochloris marina (strain MBIC 11017).